The following is a 313-amino-acid chain: Olfactory receptor 56A4 (313 aa).

Topologically, residues 1–28 (MASPSNDSTAPVSEFLLICFPNFQSWQH) are extracellular. The N-linked (GlcNAc...) asparagine glycan is linked to N6. A helical membrane pass occupies residues 29–49 (WLSLPLSLLFLLAMGANTTLL). At 50–57 (ITIQLEAS) the chain is on the cytoplasmic side. The chain crosses the membrane as a helical span at residues 58-78 (LHQPLYYLLSLLSLLDIVLCL). Topologically, residues 79-102 (TVIPKVLAIFWFDLRSISFPACFL) are extracellular. A disulfide bond links C100 and C192. Residues 103–123 (QMFIMNSFLTMESCTFMVMAY) form a helical membrane-spanning segment. Residues 124–142 (DRYVAICHPLRYPSIITDQ) are Cytoplasmic-facing. A helical transmembrane segment spans residues 143 to 163 (FVARAVVFVIARNAFVSLPVP). At 164 to 199 (MLSARLRYCAGNIIKNCICSNLSVSKLSCDDITFNQ) the chain is on the extracellular side. Residue N184 is glycosylated (N-linked (GlcNAc...) asparagine). The helical transmembrane segment at 200–220 (LYQFVAGWTLLGSDLILIVIS) threads the bilayer. Residues 221-240 (YSFILKVVLRIKAEGAVAKA) are Cytoplasmic-facing. The helical transmembrane segment at 241–261 (LSTCGSHFILILFFSTVLLVL) threads the bilayer. The Extracellular portion of the chain corresponds to 262 to 276 (VITNLARKRIPPDVP). Residues 277–297 (ILLNILHHLIPPALNPIVYGV) form a helical membrane-spanning segment. The Cytoplasmic portion of the chain corresponds to 298-313 (RTKEIKQGIQNLLKRL).

It belongs to the G-protein coupled receptor 1 family.

The protein localises to the cell membrane. In terms of biological role, odorant receptor. The sequence is that of Olfactory receptor 56A4 (OR56A4) from Homo sapiens (Human).